Reading from the N-terminus, the 143-residue chain is Transmembrane protein 80 (143 aa).

The next 4 membrane-spanning stretches (helical) occupy residues 22–42 (LLCLSGTYYALYFLATLLLLV), 47–67 (VFTYPHSCLVLDLTLLFLMGI), 88–108 (LAASLVLTVGSALLSAYFLLW), and 122–142 (PLLALHGLEAVLQVVAIAAFV).

It localises to the membrane. It is found in the cell projection. The protein resides in the cilium. In Bos taurus (Bovine), this protein is Transmembrane protein 80 (TMEM80).